A 430-amino-acid polypeptide reads, in one-letter code: Adenylosuccinate synthetase (430 aa).

GTP-binding positions include 12–18 (GDEGKGK) and 40–42 (GHT). Asp13 (proton acceptor) is an active-site residue. Residues Asp13 and Gly40 each contribute to the Mg(2+) site. Residues 13–16 (DEGK), 38–41 (NAGH), Thr130, Arg144, Gln224, Thr239, and Arg303 contribute to the IMP site. His41 functions as the Proton donor in the catalytic mechanism. Residue 299 to 305 (VVTGRPR) participates in substrate binding. GTP-binding positions include Arg305, 331–333 (KLD), and 413–415 (STS).

The protein belongs to the adenylosuccinate synthetase family. Homodimer. Mg(2+) serves as cofactor.

The protein localises to the cytoplasm. The enzyme catalyses IMP + L-aspartate + GTP = N(6)-(1,2-dicarboxyethyl)-AMP + GDP + phosphate + 2 H(+). It participates in purine metabolism; AMP biosynthesis via de novo pathway; AMP from IMP: step 1/2. In terms of biological role, plays an important role in the de novo pathway of purine nucleotide biosynthesis. Catalyzes the first committed step in the biosynthesis of AMP from IMP. This Azorhizobium caulinodans (strain ATCC 43989 / DSM 5975 / JCM 20966 / LMG 6465 / NBRC 14845 / NCIMB 13405 / ORS 571) protein is Adenylosuccinate synthetase.